We begin with the raw amino-acid sequence, 667 residues long: Transketolase 2 (667 aa).

Histidine 25 contributes to the substrate binding site. Thiamine diphosphate contacts are provided by residues histidine 65 and glycine 113–leucine 115. Aspartate 154 serves as a coordination point for Mg(2+). Positions 155 and 184 each coordinate thiamine diphosphate. Residues asparagine 184 and isoleucine 186 each contribute to the Mg(2+) site. Residue histidine 260 participates in substrate binding. Histidine 260 lines the thiamine diphosphate pocket. An N6-acetyllysine modification is found at lysine 342. Substrate contacts are provided by arginine 357 and serine 384. The active-site Proton donor is glutamate 410. Phenylalanine 436 serves as a coordination point for thiamine diphosphate. Residues histidine 460, aspartate 468, and arginine 519 each contribute to the substrate site.

The protein belongs to the transketolase family. As to quaternary structure, homodimer. Mg(2+) is required as a cofactor. Requires Ca(2+) as cofactor. It depends on Mn(2+) as a cofactor. Co(2+) serves as cofactor. The cofactor is thiamine diphosphate.

It catalyses the reaction D-sedoheptulose 7-phosphate + D-glyceraldehyde 3-phosphate = aldehydo-D-ribose 5-phosphate + D-xylulose 5-phosphate. In terms of biological role, catalyzes the reversible transfer of a two-carbon ketol group from sedoheptulose-7-phosphate to glyceraldehyde-3-phosphate, producing xylulose-5-phosphate and ribose-5-phosphate. Catalyzes the transfer of a two-carbon ketol group from a ketose donor to an aldose acceptor, via a covalent intermediate with the cofactor thiamine pyrophosphate. The chain is Transketolase 2 from Escherichia coli (strain K12).